The following is a 155-amino-acid chain: MTIKIIEGDFKSATGKYALLVSRWNSFVVEHLKEGALDTLRRHGVSDDDIEIVYAPGAFEFPLAAQKLAASGDYDAIVALGAVIRGGTPHFDYVAGECTKGLAQVSLATGIPVAFGVLTVDSIEQAIERSGTKAGNKGSEAAETALEMVSLLGKL.

5-amino-6-(D-ribitylamino)uracil contacts are provided by residues W24, 58–60, and 82–84; these read AFE and AVI. A (2S)-2-hydroxy-3-oxobutyl phosphate-binding site is contributed by 87 to 88; it reads GT. Residue H90 is the Proton donor of the active site. F115 serves as a coordination point for 5-amino-6-(D-ribitylamino)uracil. R129 contacts (2S)-2-hydroxy-3-oxobutyl phosphate.

Belongs to the DMRL synthase family. As to quaternary structure, forms an icosahedral capsid composed of 60 subunits, arranged as a dodecamer of pentamers.

It carries out the reaction (2S)-2-hydroxy-3-oxobutyl phosphate + 5-amino-6-(D-ribitylamino)uracil = 6,7-dimethyl-8-(1-D-ribityl)lumazine + phosphate + 2 H2O + H(+). It participates in cofactor biosynthesis; riboflavin biosynthesis; riboflavin from 2-hydroxy-3-oxobutyl phosphate and 5-amino-6-(D-ribitylamino)uracil: step 1/2. Functionally, catalyzes the formation of 6,7-dimethyl-8-ribityllumazine by condensation of 5-amino-6-(D-ribitylamino)uracil with 3,4-dihydroxy-2-butanone 4-phosphate. This is the penultimate step in the biosynthesis of riboflavin. The polypeptide is 6,7-dimethyl-8-ribityllumazine synthase (Teredinibacter turnerae (strain ATCC 39867 / T7901)).